Here is a 480-residue protein sequence, read N- to C-terminus: Cobyric acid synthase (480 aa).

In terms of domain architecture, GATase cobBQ-type spans 246–434 (KILIAVPILP…VHGLFSELAQ (189 aa)). Catalysis depends on cysteine 328, which acts as the Nucleophile. Residue histidine 426 is part of the active site.

This sequence belongs to the CobB/CobQ family. CobQ subfamily.

The protein operates within cofactor biosynthesis; adenosylcobalamin biosynthesis. Catalyzes amidations at positions B, D, E, and G on adenosylcobyrinic A,C-diamide. NH(2) groups are provided by glutamine, and one molecule of ATP is hydrogenolyzed for each amidation. This Methylocella silvestris (strain DSM 15510 / CIP 108128 / LMG 27833 / NCIMB 13906 / BL2) protein is Cobyric acid synthase.